Consider the following 368-residue polypeptide: UPF0284 protein PCC8801_3324 (368 aa).

It belongs to the UPF0284 family.

In Rippkaea orientalis (strain PCC 8801 / RF-1) (Cyanothece sp. (strain PCC 8801)), this protein is UPF0284 protein PCC8801_3324.